Here is a 461-residue protein sequence, read N- to C-terminus: MSYPGQGGNTYGGGPPGGYGGYNQQDRYGGGGGNYGPPQGPPPGQYGGGYGGPGGGYGGSGGGYGPPQGPPPGQYGGSGGPGGYGPPQGPPPGQRGNYGPPQGPPGGQGGGGGGYGHPGMGNQAPPGQYGQPGPPGPHGNHNMPPQGNQAFGGTQGYHFQYSNCSGKKKALLIGCNYIGSKNALRGCINDVHNLQRYLVQRAGYKPDDMVILTDDQRDQRSIPTKQNILQACQWLVKGAQPNDSLVFHFSGHGGQEKDVDGDEDDGYDECIYPVDFQRAGSIIDDVLHDILVKSLPPGCRLTALFDSCHSGTALDLPYVYSTKGILKEPNLAKEAGQGLLGAVSSYARGDIGGALSSIMGTVKQATTGSGANQRAKQTKTAPCDAISISGCKDSQTSADAMEGGTATGAMSFAFIEVMTRDPNQSYLSLLNNMREVLRGKYSQKPQLSASHPTDVNLKFIM.

Gly residues-rich tracts occupy residues M1–G21, Q45–P66, Q74–P86, and P105–G119. The disordered stretch occupies residues M1–T154. 2 stretches are compositionally biased toward low complexity: residues G121–Q131 and H138–N148. Active-site residues include H252 and C308.

Belongs to the peptidase C14B family.

Involved in cell death (apoptosis). The chain is Metacaspase-1 (MCA1) from Yarrowia lipolytica (strain CLIB 122 / E 150) (Yeast).